The chain runs to 895 residues: Zinc finger protein 281 (895 aa).

Disordered stretches follow at residues 1–44 (MKIG…EMEP) and 63–113 (FTRP…AFPS). K2 is covalently cross-linked (Glycyl lysine isopeptide (Lys-Gly) (interchain with G-Cter in SUMO2)). A compositionally biased stretch (gly residues) spans 7–36 (FLSGGGGTGSSGGSGSGGGGSGGGGGGGSS). Glycyl lysine isopeptide (Lys-Gly) (interchain with G-Cter in SUMO2) cross-links involve residues R65, K101, and K128. 2 stretches are compositionally biased toward basic and acidic residues: residues 130 to 140 (EKPADPEEQQS) and 202 to 218 (RTDDHHGTEEPKQDTNV). Disordered regions lie at residues 130–149 (EKPADPEEQQSHHHHHHHHY) and 183–253 (HVQQ…EGAI). Residues K213, K219, K225, K232, K242, and K259 each participate in a glycyl lysine isopeptide (Lys-Gly) (interchain with G-Cter in SUMO2) cross-link. C2H2-type zinc fingers lie at residues 261-283 (HICDHCSAAFRSSYHLRRHVLIH), 289-311 (FQCSQCSMGFIQKYLLQRHEKIH), and 317-339 (FGCDQCSMKFIQKYHMERHKRTH). Glycyl lysine isopeptide (Lys-Gly) (interchain with G-Cter in SUMO2) cross-links involve residues K301 and K325. The segment at 345–367 (YKCDTCQQYFSRTDRLLKHRRTC) adopts a C2H2-type 4; atypical zinc-finger fold. K373 is covalently cross-linked (Glycyl lysine isopeptide (Lys-Gly) (interchain with G-Cter in SUMO2)). Residues 377-427 (SAEPGSSNHTNMGNLAVLSQGNTSSSRRKTKSKSIAIENKEQKTGKTNESQ) form a disordered region. A compositionally biased stretch (polar residues) spans 379-398 (EPGSSNHTNMGNLAVLSQGN). S395 is subject to Phosphoserine. Residues K409, K416, K460, and K477 each participate in a glycyl lysine isopeptide (Lys-Gly) (interchain with G-Cter in SUMO2) cross-link. Phosphoserine is present on S484. Residues K493, K498, K539, K599, K617, and K622 each participate in a glycyl lysine isopeptide (Lys-Gly) (interchain with G-Cter in SUMO2) cross-link. Positions 638-660 (SGEHSELVQEENLSPGTQTPSND) are disordered. A compositionally biased stretch (polar residues) spans 648–660 (ENLSPGTQTPSND). Phosphoserine is present on S651. Glycyl lysine isopeptide (Lys-Gly) (interchain with G-Cter in SUMO2) cross-links involve residues K661 and K670. Polar residues predominate over residues 778 to 789 (SSAFQSSSQKLT). The tract at residues 778–817 (SSAFQSSSQKLTSQKEQKNLESSTGFQIPSQELASQIDPQ) is disordered. A Phosphoserine modification is found at S785. Residues K787, K792, and K795 each participate in a glycyl lysine isopeptide (Lys-Gly) (interchain with G-Cter in SUMO2) cross-link. Over residues 797–815 (LESSTGFQIPSQELASQID) the composition is skewed to polar residues. At S807 the chain carries Phosphoserine. Residues K818 and K840 each participate in a glycyl lysine isopeptide (Lys-Gly) (interchain with G-Cter in SUMO2) cross-link. T888 bears the Phosphothreonine mark.

This sequence belongs to the krueppel C2H2-type zinc-finger protein family.

Its subcellular location is the nucleus. In terms of biological role, transcription repressor that plays a role in regulation of embryonic stem cells (ESCs) differentiation. Required for ESCs differentiation and acts by mediating autorepression of NANOG in ESCs: binds to the NANOG promoter and promotes association of NANOG protein to its own promoter and recruits the NuRD complex, which deacetylates histones. Not required for establishement and maintenance of ESCs. Represses the transcription of a number of genes including GAST, ODC1 and VIM. Binds to the G-rich box in the enhancer region of these genes. The sequence is that of Zinc finger protein 281 (ZNF281) from Homo sapiens (Human).